The following is a 548-amino-acid chain: Glucose-6-phosphate isomerase (548 aa).

Residue Glu353 is the Proton donor of the active site. Catalysis depends on residues His384 and Lys512.

It belongs to the GPI family.

It is found in the cytoplasm. The enzyme catalyses alpha-D-glucose 6-phosphate = beta-D-fructose 6-phosphate. The protein operates within carbohydrate biosynthesis; gluconeogenesis. It functions in the pathway carbohydrate degradation; glycolysis; D-glyceraldehyde 3-phosphate and glycerone phosphate from D-glucose: step 2/4. Catalyzes the reversible isomerization of glucose-6-phosphate to fructose-6-phosphate. The sequence is that of Glucose-6-phosphate isomerase from Pseudoalteromonas translucida (strain TAC 125).